The sequence spans 56 residues: MLRWAVTFLIIALIAALFGFGGIAGASAGIAQILFFVFIALFAISLVARGLSGPSS.

Helical transmembrane passes span 4 to 24 (WAVT…GGIA) and 29 to 48 (GIAQ…SLVA).

The protein belongs to the UPF0391 family.

The protein localises to the cell membrane. This chain is UPF0391 membrane protein Jann_3570, found in Jannaschia sp. (strain CCS1).